Consider the following 382-residue polypeptide: Chaperone protein DnaJ (382 aa).

The J domain maps to 5-69 (DYYEILGVSK…EKRARYDRFG (65 aa)). The CR-type zinc finger occupies 137–219 (GKETEIEIPR…CGGTGRVKRR (83 aa)). The Zn(2+) site is built by Cys-150, Cys-153, Cys-167, Cys-170, Cys-193, Cys-196, Cys-207, and Cys-210. CXXCXGXG motif repeat units lie at residues 150–157 (CDTCQGSG), 167–174 (CPHCHGSG), 193–200 (CPVCGGTG), and 207–214 (CPTCGGTG). The disordered stretch occupies residues 154–175 (QGSGAKPGTSPTSCPHCHGSGQ).

It belongs to the DnaJ family. Homodimer. Requires Zn(2+) as cofactor.

It localises to the cytoplasm. Its function is as follows. Participates actively in the response to hyperosmotic and heat shock by preventing the aggregation of stress-denatured proteins and by disaggregating proteins, also in an autonomous, DnaK-independent fashion. Unfolded proteins bind initially to DnaJ; upon interaction with the DnaJ-bound protein, DnaK hydrolyzes its bound ATP, resulting in the formation of a stable complex. GrpE releases ADP from DnaK; ATP binding to DnaK triggers the release of the substrate protein, thus completing the reaction cycle. Several rounds of ATP-dependent interactions between DnaJ, DnaK and GrpE are required for fully efficient folding. Also involved, together with DnaK and GrpE, in the DNA replication of plasmids through activation of initiation proteins. The polypeptide is Chaperone protein DnaJ (Geobacillus kaustophilus (strain HTA426)).